The sequence spans 229 residues: Flagellar L-ring protein (229 aa).

Residues 1-25 form the signal peptide; sequence MKQVRLPSSATVRAACAVAVAALAG. Residue Cys26 is the site of N-palmitoyl cysteine attachment. Cys26 carries the S-diacylglycerol cysteine lipid modification.

Belongs to the FlgH family. As to quaternary structure, the basal body constitutes a major portion of the flagellar organelle and consists of four rings (L,P,S, and M) mounted on a central rod.

It is found in the cell outer membrane. The protein resides in the bacterial flagellum basal body. Its function is as follows. Assembles around the rod to form the L-ring and probably protects the motor/basal body from shearing forces during rotation. This is Flagellar L-ring protein from Burkholderia cenocepacia (strain ATCC BAA-245 / DSM 16553 / LMG 16656 / NCTC 13227 / J2315 / CF5610) (Burkholderia cepacia (strain J2315)).